A 166-amino-acid chain; its full sequence is NAD(P)H-quinone oxidoreductase subunit I, chloroplastic (166 aa).

2 consecutive 4Fe-4S ferredoxin-type domains span residues 55–84 (GRIHFEFDKCIACEVCVRVCPIDLPVVDWK) and 95–124 (LNYSIDFGICIFCGNCVEYCPTNCLSMTEE). Positions 64, 67, 70, 74, 104, 107, 110, and 114 each coordinate [4Fe-4S] cluster.

This sequence belongs to the complex I 23 kDa subunit family. In terms of assembly, NDH is composed of at least 16 different subunits, 5 of which are encoded in the nucleus. Requires [4Fe-4S] cluster as cofactor.

The protein resides in the plastid. It is found in the chloroplast thylakoid membrane. It carries out the reaction a plastoquinone + NADH + (n+1) H(+)(in) = a plastoquinol + NAD(+) + n H(+)(out). The enzyme catalyses a plastoquinone + NADPH + (n+1) H(+)(in) = a plastoquinol + NADP(+) + n H(+)(out). Functionally, NDH shuttles electrons from NAD(P)H:plastoquinone, via FMN and iron-sulfur (Fe-S) centers, to quinones in the photosynthetic chain and possibly in a chloroplast respiratory chain. The immediate electron acceptor for the enzyme in this species is believed to be plastoquinone. Couples the redox reaction to proton translocation, and thus conserves the redox energy in a proton gradient. In Ambrosia trifida (Giant ragweed), this protein is NAD(P)H-quinone oxidoreductase subunit I, chloroplastic.